An 804-amino-acid chain; its full sequence is Leucine--tRNA ligase (804 aa).

The 'HIGH' region motif lies at 40-51; sequence PYPSGAGLHVGH. The 'KMSKS' region signature appears at 576 to 580; the sequence is KMSKS. Lysine 579 serves as a coordination point for ATP.

It belongs to the class-I aminoacyl-tRNA synthetase family.

The protein localises to the cytoplasm. It catalyses the reaction tRNA(Leu) + L-leucine + ATP = L-leucyl-tRNA(Leu) + AMP + diphosphate. The chain is Leucine--tRNA ligase from Bacillus velezensis (strain DSM 23117 / BGSC 10A6 / LMG 26770 / FZB42) (Bacillus amyloliquefaciens subsp. plantarum).